A 303-amino-acid polypeptide reads, in one-letter code: Phospholipase A1 2 (303 aa).

C6 and C90 are oxidised to a cystine. The active-site Nucleophile is the S140. Residue D168 is the Charge relay system of the active site. A disulfide bridge links C179 with C184. H232 functions as the Charge relay system in the catalytic mechanism. Cystine bridges form between C247–C271, C248–C296, and C264–C269.

Belongs to the AB hydrolase superfamily. Lipase family. As to expression, expressed by the venom gland.

The protein resides in the secreted. It carries out the reaction a 1,2-diacyl-sn-glycero-3-phosphocholine + H2O = a 2-acyl-sn-glycero-3-phosphocholine + a fatty acid + H(+). Functionally, catalyzes the hydrolysis of phosphatidylcholine with phospholipase A1 activity. May act as an allergen and induce hemolytic activity. This is Phospholipase A1 2 from Dolichovespula maculata (Bald-faced hornet).